The sequence spans 191 residues: Small ribosomal subunit protein uS7 (191 aa).

The interval 56 to 80 (NKSGEQGDGDGESGGKAGGIKKRSL) is disordered.

This sequence belongs to the universal ribosomal protein uS7 family. Part of the 30S ribosomal subunit. Contacts proteins S9 and S11.

Its function is as follows. One of the primary rRNA binding proteins, it binds directly to 16S rRNA where it nucleates assembly of the head domain of the 30S subunit. Is located at the subunit interface close to the decoding center, probably blocks exit of the E-site tRNA. The protein is Small ribosomal subunit protein uS7 of Coxiella burnetii (strain CbuK_Q154) (Coxiella burnetii (strain Q154)).